An 89-amino-acid polypeptide reads, in one-letter code: Protein M7 (89 aa).

A signal peptide spans 1 to 25 (MAAMKSLATAILVVLLLRRLPRGLS). 4 disulfide bridges follow: Cys28–Cys65, Cys38–Cys54, Cys55–Cys80, and Cys67–Cys87.

It belongs to the A9/FIL1 family. In terms of tissue distribution, tapetum of anthers.

The protein resides in the secreted. This Lilium henryi (Henry's lily) protein is Protein M7 (M7).